Reading from the N-terminus, the 159-residue chain is 17 kDa surface antigen (159 aa).

Positions 1–19 are cleaved as a signal peptide; sequence MKLLSKIMIIALATSMLQA. Cys-20 carries N-palmitoyl cysteine lipidation. The S-diacylglycerol cysteine moiety is linked to residue Cys-20.

It belongs to the rickettsiale 17 kDa surface antigen family.

The protein localises to the cell outer membrane. The polypeptide is 17 kDa surface antigen (omp) (Rickettsia conorii (strain ATCC VR-613 / Malish 7)).